We begin with the raw amino-acid sequence, 333 residues long: 4-hydroxyproline epimerase (333 aa).

Residue Cys90 is the Proton acceptor of the active site. Residues 91 to 92 (GH) and Asp249 each bind substrate. The Proton donor role is filled by Cys253. 254-255 (GT) is a binding site for substrate.

Belongs to the proline racemase family. Homodimer.

The enzyme catalyses trans-4-hydroxy-L-proline = cis-4-hydroxy-D-proline. Its function is as follows. Allows intracellular utilization of 4-hydroxyproline, one of the major constituents of host collagen, by converting 4-hydroxy-L-proline to 4-hydroxy-D-proline, which can be further metabolized by intracellular 4-hydroxy-D-proline oxidases. Strong B-cell mitogen. Plays an important role in the regulation of intra- and extracellular amino acid pools, allowing the bacterium to profit from host precursors and enzymatic pathways. This Brucella suis (strain ATCC 23445 / NCTC 10510) protein is 4-hydroxyproline epimerase.